The primary structure comprises 61 residues: Large ribosomal subunit protein uL30 (61 aa).

This sequence belongs to the universal ribosomal protein uL30 family. As to quaternary structure, part of the 50S ribosomal subunit.

The chain is Large ribosomal subunit protein uL30 from Chromohalobacter salexigens (strain ATCC BAA-138 / DSM 3043 / CIP 106854 / NCIMB 13768 / 1H11).